We begin with the raw amino-acid sequence, 288 residues long: 4-diphosphocytidyl-2-C-methyl-D-erythritol kinase (288 aa).

Lysine 8 is an active-site residue. 90–100 (PFGAGLGGGSS) is an ATP binding site. The active site involves aspartate 132.

The protein belongs to the GHMP kinase family. IspE subfamily.

The enzyme catalyses 4-CDP-2-C-methyl-D-erythritol + ATP = 4-CDP-2-C-methyl-D-erythritol 2-phosphate + ADP + H(+). Its pathway is isoprenoid biosynthesis; isopentenyl diphosphate biosynthesis via DXP pathway; isopentenyl diphosphate from 1-deoxy-D-xylulose 5-phosphate: step 3/6. In terms of biological role, catalyzes the phosphorylation of the position 2 hydroxy group of 4-diphosphocytidyl-2C-methyl-D-erythritol. In Chlorobium chlorochromatii (strain CaD3), this protein is 4-diphosphocytidyl-2-C-methyl-D-erythritol kinase.